Consider the following 391-residue polypeptide: Formate-dependent phosphoribosylglycinamide formyltransferase (391 aa).

Residues 18 to 19 (EL) and Glu78 each bind N(1)-(5-phospho-beta-D-ribosyl)glycinamide. ATP contacts are provided by residues Arg110, Lys151, 156 to 161 (SSGKGQ), 191 to 194 (EEFI), and Glu199. Positions 115-305 (ELVSRDLKIK…EFELHLRAFL (191 aa)) constitute an ATP-grasp domain. The Mg(2+) site is built by Glu264 and Glu276. Residues Asp283, Lys353, and 360-361 (RR) contribute to the N(1)-(5-phospho-beta-D-ribosyl)glycinamide site.

Belongs to the PurK/PurT family. In terms of assembly, homodimer.

It catalyses the reaction N(1)-(5-phospho-beta-D-ribosyl)glycinamide + formate + ATP = N(2)-formyl-N(1)-(5-phospho-beta-D-ribosyl)glycinamide + ADP + phosphate + H(+). The protein operates within purine metabolism; IMP biosynthesis via de novo pathway; N(2)-formyl-N(1)-(5-phospho-D-ribosyl)glycinamide from N(1)-(5-phospho-D-ribosyl)glycinamide (formate route): step 1/1. Functionally, involved in the de novo purine biosynthesis. Catalyzes the transfer of formate to 5-phospho-ribosyl-glycinamide (GAR), producing 5-phospho-ribosyl-N-formylglycinamide (FGAR). Formate is provided by PurU via hydrolysis of 10-formyl-tetrahydrofolate. This Prochlorococcus marinus (strain MIT 9312) protein is Formate-dependent phosphoribosylglycinamide formyltransferase.